The following is a 193-amino-acid chain: MVLIGLMGGKGSGKTTAASYLIDRLGFIEKSFADPLKKACKELFLLSDEQIYGTQEQKETPDDRWFGCTPRKMLQYVGTDLLRDYLDNIMPGLHKNIFTHHFRLWYRDLMMKNPHACVVISDVRFQNEADFIKELGGYLIKIDRPGIASDDTHPSEVELRSIKSYDIVLVNNKTIEEFYSQIISCVDNASQMN.

Position 10 (Lys-10) interacts with dGMP. Residues Gly-13 and Thr-16 each coordinate ATP. Leu-36, Lys-37, Lys-58, Asp-122, Arg-124, Glu-128, and Ser-155 together coordinate dGMP.

It belongs to the dNMP kinase family.

It carries out the reaction a 2'-deoxyribonucleoside 5'-phosphate + ATP = a 2'-deoxyribonucleoside 5'-diphosphate + ADP. The polypeptide is Putative deoxynucleotide monophosphate kinase (Acanthamoeba polyphaga mimivirus (APMV)).